Here is a 73-residue protein sequence, read N- to C-terminus: UPF0352 protein APL_0584 (73 aa).

The protein belongs to the UPF0352 family.

The protein is UPF0352 protein APL_0584 of Actinobacillus pleuropneumoniae serotype 5b (strain L20).